The primary structure comprises 204 residues: Protein OPG030 (204 aa).

The region spanning 95–177 (FLRQYINNNI…ITYSELTNAI (83 aa)) is the BACK domain.

This sequence belongs to the orthopoxvirus OPG030 family.

This chain is Protein OPG030 (OPG30), found in Homo sapiens (Human).